The sequence spans 283 residues: Thymidylate synthase (283 aa).

Arginine 22 is a dUMP binding site. Catalysis depends on cysteine 160, which acts as the Nucleophile. DUMP-binding positions include 180–183, asparagine 191, and 221–223; these read RSCD and HIY. A (6R)-5,10-methylene-5,6,7,8-tetrahydrofolate-binding site is contributed by aspartate 183. Serine 282 is a binding site for (6R)-5,10-methylene-5,6,7,8-tetrahydrofolate.

This sequence belongs to the thymidylate synthase family. Bacterial-type ThyA subfamily. In terms of assembly, homodimer.

Its subcellular location is the cytoplasm. It catalyses the reaction dUMP + (6R)-5,10-methylene-5,6,7,8-tetrahydrofolate = 7,8-dihydrofolate + dTMP. The protein operates within pyrimidine metabolism; dTTP biosynthesis. In terms of biological role, catalyzes the reductive methylation of 2'-deoxyuridine-5'-monophosphate (dUMP) to 2'-deoxythymidine-5'-monophosphate (dTMP) while utilizing 5,10-methylenetetrahydrofolate (mTHF) as the methyl donor and reductant in the reaction, yielding dihydrofolate (DHF) as a by-product. This enzymatic reaction provides an intracellular de novo source of dTMP, an essential precursor for DNA biosynthesis. The chain is Thymidylate synthase from Psychromonas ingrahamii (strain DSM 17664 / CCUG 51855 / 37).